The following is a 171-amino-acid chain: Dual specificity protein phosphatase OPG106 (171 aa).

Belongs to the protein-tyrosine phosphatase family. Non-receptor class dual specificity subfamily. Homodimer.

The protein localises to the virion. It localises to the host cytoplasm. It carries out the reaction O-phospho-L-tyrosyl-[protein] + H2O = L-tyrosyl-[protein] + phosphate. The enzyme catalyses O-phospho-L-seryl-[protein] + H2O = L-seryl-[protein] + phosphate. In terms of biological role, serine/tyrosine phosphatase which down-regulates cellular antiviral response by dephosphorylating activated host STAT1 and blocking interferon (IFN)-stimulated innate immune responses. Dephosphorylates the OPG144 protein. The sequence is that of Dual specificity protein phosphatase OPG106 (OPG106) from Monkeypox virus.